A 742-amino-acid chain; its full sequence is Enhancer of polycomb-like protein 1 (742 aa).

Positions 1–27 (MPTPSAQLDQGIISSNGGTSGVSASST) are enriched in polar residues. 3 disordered regions span residues 1–28 (MPTP…SSTR), 416–446 (RQQS…QCQQ), and 718–742 (KKLV…HQQA). Over residues 724–734 (QRQQQQQQQEQ) the composition is skewed to low complexity.

Belongs to the enhancer of polycomb family. As to quaternary structure, component of the NuA4 histone acetyltransferase complex.

It localises to the nucleus. In terms of biological role, component of the NuA4 histone acetyltransferase complex which is involved in transcriptional activation of selected genes principally by acetylation of nucleosomal histone H4 and H2A. The NuA4 complex is also involved in DNA repair. Involved in gene silencing by neighboring heterochromatin, blockage of the silencing spreading along the chromosome, and required for cell cycle progression through G2/M. This Eremothecium gossypii (strain ATCC 10895 / CBS 109.51 / FGSC 9923 / NRRL Y-1056) (Yeast) protein is Enhancer of polycomb-like protein 1 (EPL1).